Consider the following 504-residue polypeptide: Multidrug efflux pump LfrA (504 aa).

14 consecutive transmembrane segments (helical) span residues 19–39 (WVAL…NTVL), 58–78 (LWIV…MGSL), 87–107 (LLLI…FAPS), 110–130 (LLVG…PSTL), 145–165 (LAIA…PIVG), 172–192 (FHWG…LVLG), 206–226 (PFDP…VWAV), 233–253 (GLSA…ALFV), 275–295 (TSSI…IFFI), 309–329 (TAGL…LAVV), 338–358 (DTLM…ILLF), 361–381 (NLTV…VGVS), 408–428 (AYEL…TAFY), and 480–500 (IAPT…VVGV).

This sequence belongs to the major facilitator superfamily.

Its subcellular location is the cell inner membrane. Its activity is regulated as follows. Inhibited by the protonophore carbonyl cyanide m-chorophenylhydrazone (CCCP). Ethidium bromide efflux is inhibited by chlorpromazine, thioridazine and verapamil. Its function is as follows. Energy-dependent efflux pump that contributes to drug resistance. Catalyzes the efflux of norfloxacin and several related fluoroquinolones (FQ). Contributes significantly to the intrinsic MICs for ethidium bromide and acriflavine. Overexpression confers low-level resistance to hydrophilic FQ such as ciprofloxacin, ofloxacin and levofloxacin, and to ethidium bromide, acridine, acriflavine, rhodamine 123 and some quaternary ammonium compounds. May contribute to resistance to certain beta-lactams. Probably uses the proton motive force to export drugs. This chain is Multidrug efflux pump LfrA, found in Mycolicibacterium smegmatis (strain ATCC 700084 / mc(2)155) (Mycobacterium smegmatis).